We begin with the raw amino-acid sequence, 197 residues long: ATP-dependent Clp protease proteolytic subunit (197 aa).

Catalysis depends on Ser98, which acts as the Nucleophile. His123 is an active-site residue.

This sequence belongs to the peptidase S14 family. As to quaternary structure, fourteen ClpP subunits assemble into 2 heptameric rings which stack back to back to give a disk-like structure with a central cavity, resembling the structure of eukaryotic proteasomes.

The protein resides in the cytoplasm. The catalysed reaction is Hydrolysis of proteins to small peptides in the presence of ATP and magnesium. alpha-casein is the usual test substrate. In the absence of ATP, only oligopeptides shorter than five residues are hydrolyzed (such as succinyl-Leu-Tyr-|-NHMec, and Leu-Tyr-Leu-|-Tyr-Trp, in which cleavage of the -Tyr-|-Leu- and -Tyr-|-Trp bonds also occurs).. Its function is as follows. Cleaves peptides in various proteins in a process that requires ATP hydrolysis. Has a chymotrypsin-like activity. Plays a major role in the degradation of misfolded proteins. The polypeptide is ATP-dependent Clp protease proteolytic subunit (Lysinibacillus sphaericus (strain C3-41)).